A 240-amino-acid chain; its full sequence is MIIFPAIDIKDNKCVRLTQGEFDKVNVYYDNPLEVAYKWKNEGAEYIHIVDLNGARSEFGVNTKIIEDIANNIDIPIQVGGGVRDKEKVKSLINAGVTRVILGSIAIENLNLVEELVNEYKEKIVVSIDAKDGKVAVRGWEVVSNVDSLTLCKQLEKIGVQTIVYTDISKDGMLQGPNFDIYERIAKETSLNVIASGGVTSIEDVKRLKAMNLYGAIIGKALYDKKIDFKEAQQLCLLGE.

Asp8 acts as the Proton acceptor in catalysis. Asp129 functions as the Proton donor in the catalytic mechanism.

The protein belongs to the HisA/HisF family.

Its subcellular location is the cytoplasm. It catalyses the reaction 1-(5-phospho-beta-D-ribosyl)-5-[(5-phospho-beta-D-ribosylamino)methylideneamino]imidazole-4-carboxamide = 5-[(5-phospho-1-deoxy-D-ribulos-1-ylimino)methylamino]-1-(5-phospho-beta-D-ribosyl)imidazole-4-carboxamide. It participates in amino-acid biosynthesis; L-histidine biosynthesis; L-histidine from 5-phospho-alpha-D-ribose 1-diphosphate: step 4/9. This Clostridioides difficile (strain 630) (Peptoclostridium difficile) protein is 1-(5-phosphoribosyl)-5-[(5-phosphoribosylamino)methylideneamino] imidazole-4-carboxamide isomerase.